The sequence spans 246 residues: 3'(2'),5'-bisphosphate nucleotidase CysQ (246 aa).

5 residues coordinate Mg(2+): E64, D83, L85, D86, and D205. E64 is a substrate binding site. Substrate-binding positions include 85–88 (LDGT) and D205.

The protein belongs to the inositol monophosphatase superfamily. CysQ family. Mg(2+) is required as a cofactor.

The protein localises to the cell inner membrane. It carries out the reaction adenosine 3',5'-bisphosphate + H2O = AMP + phosphate. Converts adenosine-3',5'-bisphosphate (PAP) to AMP. This Salmonella typhimurium (strain LT2 / SGSC1412 / ATCC 700720) protein is 3'(2'),5'-bisphosphate nucleotidase CysQ.